An 828-amino-acid polypeptide reads, in one-letter code: Beta-galactosidase 13 (828 aa).

The first 23 residues, 1–23, serve as a signal peptide directing secretion; that stretch reads MKTTMAAAATCLVALLVVVLAEA. N-linked (GlcNAc...) asparagine glycosylation is present at Asn-157. The active-site Proton donor is the Glu-187. Asn-198 and Asn-249 each carry an N-linked (GlcNAc...) asparagine glycan. Glu-259 functions as the Nucleophile in the catalytic mechanism. N-linked (GlcNAc...) asparagine glycans are attached at residues Asn-260, Asn-362, Asn-366, Asn-392, Asn-502, Asn-578, Asn-586, and Asn-615. The region spanning 746–828 is the SUEL-type lectin domain; sequence AEVGDAITLS…SGVLTVQASC (83 aa).

It belongs to the glycosyl hydrolase 35 family.

The protein localises to the secreted. The protein resides in the extracellular space. It localises to the apoplast. It catalyses the reaction Hydrolysis of terminal non-reducing beta-D-galactose residues in beta-D-galactosides.. In Oryza sativa subsp. japonica (Rice), this protein is Beta-galactosidase 13.